Here is a 431-residue protein sequence, read N- to C-terminus: Probable glucarate dehydratase (431 aa).

Positions 29, 108, 153, and 198 each coordinate substrate. Lys-200 (proton acceptor) is an active-site residue. Mg(2+)-binding residues include Asp-228 and Asn-276. Substrate is bound by residues 228–230 (DPN), Asn-276, 327–329 (HSN), His-356, and Arg-410. The Proton acceptor role is filled by His-327.

Belongs to the mandelate racemase/muconate lactonizing enzyme family. GlucD subfamily. The cofactor is Mg(2+).

It catalyses the reaction D-glucarate = 5-dehydro-4-deoxy-D-glucarate + H2O. It participates in carbohydrate acid metabolism; D-glucarate degradation; 2,5-dioxopentanoate from D-glucarate: step 1/2. Functionally, catalyzes the dehydration of glucarate to 5-keto-4-deoxy-D-glucarate (5-kdGluc). The sequence is that of Probable glucarate dehydratase (gudD) from Streptomyces coelicolor (strain ATCC BAA-471 / A3(2) / M145).